The sequence spans 812 residues: MSRFFSSNYEYDVASSSSEEDLLSSSEEDLLSSSSSESELDQESDDSFFNESESESEADVDSDDSDAKPYGPDWFKKSEFRKQGGGSNKFLKSSNYDSSDEESDEEDGKKVVKSAKEKLLDEMQDVYNKISQAENSDDWLTISNEFDLISRLLVRAQQQNWGTPNIFIKVVAQVEDAVNNTQQADLKNKAVARAYNTTKQRVKKVSRENEDSMAKFRNDPESFDKEPTADLDISANGFTISSSQGNDQAVQEDFFTRLQTIIDSRGKKTVNQQSLISTLEELLTVAEKPYEFIMAYLTLIPSRFDASANLSYQPIDQWKSSFNDISKLLSILDQTIDTYQVNEFADPIDFIEDEPKEDSDGVKRILGSIFSFVERLDDEFMKSLLNIDPHSSDYLIRLRDEQSIYNLILRTQLYFEATLKDEHDLERALTRPFVKRLDHIYYKSENLIKIMETAAWNIIPAQFKSKFTSKDQLDSADYVDNLIDGLSTILSKQNNIAVQKRAILYNIYYTALNKDFQTAKDMLLTSQVQTNINQFDSSLQILFNRVVVQLGLSAFKLCLIEECHQILNDLLSSSHLREILGQQSLHRISLNSSNNASADERARQCLPYHQHINLDLIDVVFLTCSLLIEIPRMTAFYSGIKVKRIPYSPKSIRRSLEHYDKLSFQGPPETLRDYVLFAAKSMQKGNWRDSVKYLREIKSWALLPNMETVLNSLTERVQVESLKTYFFSFKRFYSSFSVAKLAELFDLPENKVVEVLQSVIAELEIPAKLNDEKTIFVVEKGDEITKLEEAMVKLNKEYKIAKERLNPPSNRR.

Residues 1-110 (MSRFFSSNYE…EESDEEDGKK (110 aa)) form a disordered region. Acidic residues-rich tracts occupy residues 18–30 (SEED…EEDL) and 38–64 (SELD…DSDD). A phosphoserine mark is found at serine 98, serine 99, and serine 103. Residues 608 to 783 (YHQHINLDLI…TIFVVEKGDE (176 aa)) form the PCI domain.

The protein belongs to the eIF-3 subunit C family. In terms of assembly, the eukaryotic translation initiation factor 3 (eIF-3) core complex is composed of TIF32, PRT1, NIP1, TIF34 and TIF35. A subcomplex of TIF32, NIP1 and PRT1 mediates the interaction with eIF-1, TIF5/eIF-5 and HCR1. The factors eIF-1, eIF-2, eIF-3, TIF5/eIF-5 and methionyl-tRNAi form a multifactor complex (MFC) that may bind to the 40S ribosome. TIF32, NIP1 and TIF5/eIF-5 comprise a minimal 40S-ribosome-binding unit. NIP1 interacts with TIF5/eIF-5 and SUI1.

It is found in the cytoplasm. Functionally, component of the eukaryotic translation initiation factor 3 (eIF-3) complex, which is involved in protein synthesis of a specialized repertoire of mRNAs and, together with other initiation factors, stimulates binding of mRNA and methionyl-tRNAi to the 40S ribosome. The eIF-3 complex specifically targets and initiates translation of a subset of mRNAs involved in cell proliferation. This is Eukaryotic translation initiation factor 3 subunit C from Saccharomyces cerevisiae (strain ATCC 204508 / S288c) (Baker's yeast).